Consider the following 113-residue polypeptide: MDKKSAHRNPEDAKAGKYEGKHKRKKKRKQNQNQHRSRHRSVTSFSSDDRVFPSSSSSSSGSQTDSSTEDATQGKIKKKRREKTNKWRGKRKVSSEMSIILSGPQSLVHTICH.

Basic and acidic residues predominate over residues 1-19 (MDKKSAHRNPEDAKAGKYE). The interval 1–94 (MDKKSAHRNP…NKWRGKRKVS (94 aa)) is disordered. The segment covering 20-41 (GKHKRKKKRKQNQNQHRSRHRS) has biased composition (basic residues). Residues 52-66 (FPSSSSSSSGSQTDS) show a composition bias toward low complexity. The segment covering 75–92 (KIKKKRREKTNKWRGKRK) has biased composition (basic residues).

This is an uncharacterized protein from Macaca fascicularis (Crab-eating macaque).